A 275-amino-acid chain; its full sequence is 4-diphosphocytidyl-2-C-methyl-D-erythritol kinase (275 aa).

K14 is a catalytic residue. ATP is bound at residue 98-108; that stretch reads PMGAGLGGGSS. D140 is a catalytic residue.

Belongs to the GHMP kinase family. IspE subfamily.

The enzyme catalyses 4-CDP-2-C-methyl-D-erythritol + ATP = 4-CDP-2-C-methyl-D-erythritol 2-phosphate + ADP + H(+). It participates in isoprenoid biosynthesis; isopentenyl diphosphate biosynthesis via DXP pathway; isopentenyl diphosphate from 1-deoxy-D-xylulose 5-phosphate: step 3/6. Catalyzes the phosphorylation of the position 2 hydroxy group of 4-diphosphocytidyl-2C-methyl-D-erythritol. The protein is 4-diphosphocytidyl-2-C-methyl-D-erythritol kinase of Francisella tularensis subsp. novicida (strain U112).